Here is a 423-residue protein sequence, read N- to C-terminus: UPF0229 protein VP0986 (423 aa).

The segment at 69–112 is disordered; that stretch reads GGVRERVHPGNDQFITGDKIERPKGGGQGSGSGEGNASPDGEGQ. Residues 93-102 are compositionally biased toward gly residues; the sequence is GGGQGSGSGE.

The protein belongs to the UPF0229 family.

The protein is UPF0229 protein VP0986 of Vibrio parahaemolyticus serotype O3:K6 (strain RIMD 2210633).